We begin with the raw amino-acid sequence, 157 residues long: Phosphopantetheine adenylyltransferase (157 aa).

S9 provides a ligand contact to substrate. Residues 9 to 10 and H17 each bind ATP; that span reads SF. K41, L74, and K88 together coordinate substrate. Residues 89-91, E99, and 123-129 each bind ATP; these read GLR and YTHVSSS.

It belongs to the bacterial CoaD family. In terms of assembly, homohexamer. Requires Mg(2+) as cofactor.

It localises to the cytoplasm. It catalyses the reaction (R)-4'-phosphopantetheine + ATP + H(+) = 3'-dephospho-CoA + diphosphate. Its pathway is cofactor biosynthesis; coenzyme A biosynthesis; CoA from (R)-pantothenate: step 4/5. In terms of biological role, reversibly transfers an adenylyl group from ATP to 4'-phosphopantetheine, yielding dephospho-CoA (dPCoA) and pyrophosphate. This Micrococcus luteus (strain ATCC 4698 / DSM 20030 / JCM 1464 / CCM 169 / CCUG 5858 / IAM 1056 / NBRC 3333 / NCIMB 9278 / NCTC 2665 / VKM Ac-2230) (Micrococcus lysodeikticus) protein is Phosphopantetheine adenylyltransferase.